The sequence spans 267 residues: Ribosomal RNA small subunit methyltransferase A (267 aa).

6 residues coordinate S-adenosyl-L-methionine: N12, I14, G39, E60, D84, and N110.

The protein belongs to the class I-like SAM-binding methyltransferase superfamily. rRNA adenine N(6)-methyltransferase family. RsmA subfamily.

It is found in the cytoplasm. The enzyme catalyses adenosine(1518)/adenosine(1519) in 16S rRNA + 4 S-adenosyl-L-methionine = N(6)-dimethyladenosine(1518)/N(6)-dimethyladenosine(1519) in 16S rRNA + 4 S-adenosyl-L-homocysteine + 4 H(+). Its function is as follows. Specifically dimethylates two adjacent adenosines (A1518 and A1519) in the loop of a conserved hairpin near the 3'-end of 16S rRNA in the 30S particle. May play a critical role in biogenesis of 30S subunits. This Mesoplasma florum (strain ATCC 33453 / NBRC 100688 / NCTC 11704 / L1) (Acholeplasma florum) protein is Ribosomal RNA small subunit methyltransferase A.